We begin with the raw amino-acid sequence, 211 residues long: SAGA-associated factor 11 homolog 1 (211 aa).

Residues 115–136 (CTCPNCDRLVAAARFAPHLEKC) form an SGF11-type zinc finger. The segment at 149 to 211 (RRLATKEGSS…GSKKNNGKTF (63 aa)) is disordered. Positions 157–166 (SSASTSSTST) are enriched in low complexity. Serine 187 is subject to Phosphoserine. The segment covering 197-211 (SSRNNGSKKNNGKTF) has biased composition (low complexity).

The protein belongs to the SGF11 family. In terms of assembly, component of some SAGA transcription coactivator-HAT complexes, at least composed of Ada2b, not/nonstop, Pcaf/Gcn5, Sgf11 and Spt3. Within the SAGA complex, Sgf11, e(y)2, and not/nonstop form an additional subcomplex of SAGA called the DUB module (deubiquitination module). Interacts directly with not/nonstop. Interacts with the AMEX complex component xmas-2. Interacts with Cbp80; important for promoter recruitment of Sgf11 that is not associated with the DUB module.

It is found in the nucleus. The protein resides in the nucleoplasm. Its subcellular location is the cytoplasm. Functionally, component of the transcription regulatory histone acetylation (HAT) complex SAGA, a multiprotein complex that activates transcription by remodeling chromatin and mediating histone acetylation and deubiquitination. Within the SAGA complex, participates in a subcomplex that specifically deubiquitinates histone H2B. The SAGA complex is recruited to specific gene promoters by activators, where it is required for transcription. Required for nuclear receptor-mediated transactivation. Binds independently on SAGA to promoters in an RNA-dependent manner. Binds to mRNA and is essential for total mRNA export from the nucleus. Required to counteract heterochromatin silencing. Controls the development of neuronal connectivity in visual system by being required for accurate axon targeting in the optic lobe. Required for expression of ecdysone-induced genes such as br/broad. This Drosophila grimshawi (Hawaiian fruit fly) protein is SAGA-associated factor 11 homolog 1.